Reading from the N-terminus, the 671-residue chain is DNA ligase (671 aa).

Residues 32–36, 81–82, and Glu113 each bind NAD(+); these read DAEYD and SL. Catalysis depends on Lys115, which acts as the N6-AMP-lysine intermediate. Positions 136, 173, 290, and 314 each coordinate NAD(+). Zn(2+)-binding residues include Cys408, Cys411, Cys426, and Cys432. The region spanning 593-671 is the BRCT domain; it reads EIDSPFAGKT…EAEMIRLLGA (79 aa).

The protein belongs to the NAD-dependent DNA ligase family. LigA subfamily. The cofactor is Mg(2+). Mn(2+) is required as a cofactor.

It carries out the reaction NAD(+) + (deoxyribonucleotide)n-3'-hydroxyl + 5'-phospho-(deoxyribonucleotide)m = (deoxyribonucleotide)n+m + AMP + beta-nicotinamide D-nucleotide.. In terms of biological role, DNA ligase that catalyzes the formation of phosphodiester linkages between 5'-phosphoryl and 3'-hydroxyl groups in double-stranded DNA using NAD as a coenzyme and as the energy source for the reaction. It is essential for DNA replication and repair of damaged DNA. This Salmonella paratyphi A (strain ATCC 9150 / SARB42) protein is DNA ligase.